The following is an 876-amino-acid chain: AP-1 complex subunit gamma-1 (876 aa).

HEAT repeat units lie at residues 97 to 135 (DERQEVLMLVTNSLKQDLNHSNQYVVGLALCALGNICSA), 136 to 173 (EMARDLAPEVERLIQFRDPNIRKKAALCSTRIIRKVPD), 248 to 284 (FLHIRLLRLLRVLGQGDADASDLMTDILAQVATKTES), 308 to 345 (SLRVLAINILGRFLSNRDNNIRYVALNMLMKAITFDDQ), 346 to 382 (AVQRHRVTILECVKDPDASIRKRALELVTLLVNENNV), 384 to 417 (QLTKELIDYLEISDEDFKEDLSAKICFIVEKFSP), 418 to 454 (EKLWYIDQMLKVLCEAGKFVKDDVWHALIVVISNASE), 506 to 545 (VTESDAVDVIEDAITRHNSDSTTKAMALVALLKLSSRFPS), and 560 to 599 (SLLLEMQQRAIEYNSIVDRHKNIRSSLVDRMPVLDEATFN). Residues 756–873 (PAYAPIVAYE…LEEGQVSNFP (118 aa)) enclose the GAE domain.

It belongs to the adaptor complexes large subunit family. In terms of assembly, adaptor protein complex 1 (AP-1) is a heterotetramer composed of two large adaptins (gamma-type subunit and beta-type subunit), a medium adaptin (mu-type subunit) and a small adaptin (sigma-type subunit). Binds to EPSIN1. Interacts with DRP2A/ADL6 (via C-terminus).

The protein localises to the golgi apparatus. It localises to the cytoplasmic vesicle. It is found in the clathrin-coated vesicle membrane. In terms of biological role, subunit of clathrin-associated adaptor protein complex 1 that plays a role in protein sorting at the trans-Golgi network and early endosomes (TGN/EE). The AP complexes mediate both the recruitment of clathrin to membranes and the recognition of sorting signals within the cytosolic tails of transmembrane cargo molecules. This Arabidopsis thaliana (Mouse-ear cress) protein is AP-1 complex subunit gamma-1 (GAMMA-ADR).